The following is a 621-amino-acid chain: Phosphoenolpyruvate carboxykinase [GTP] (621 aa).

Substrate-binding positions include arginine 82 and 220–222 (YGG). Mn(2+)-binding residues include lysine 229 and histidine 249. Residue serine 271 coordinates substrate. 272–277 (QCGKTN) contributes to the GTP binding site. The active site involves cysteine 273. Aspartate 296 contacts Mn(2+). 386 to 388 (NSR) is a binding site for substrate. Residues arginine 388, arginine 419, and 514–517 (FGEN) contribute to the GTP site.

The protein belongs to the phosphoenolpyruvate carboxykinase [GTP] family. Monomer. It depends on Mn(2+) as a cofactor.

It localises to the cytoplasm. The enzyme catalyses oxaloacetate + GTP = phosphoenolpyruvate + GDP + CO2. Its pathway is carbohydrate biosynthesis; gluconeogenesis. Its function is as follows. Catalyzes the conversion of oxaloacetate (OAA) to phosphoenolpyruvate (PEP), the rate-limiting step in the metabolic pathway that produces glucose from lactate and other precursors derived from the citric acid cycle. The chain is Phosphoenolpyruvate carboxykinase [GTP] from Corynebacterium kroppenstedtii (strain DSM 44385 / JCM 11950 / CIP 105744 / CCUG 35717).